The following is a 776-amino-acid chain: Transferrin receptor protein 1 (776 aa).

Residues 1-70 (MDHARAALSN…QPQRNGKRLC (70 aa)) lie on the Cytoplasmic side of the membrane. An Endocytosis signal motif is present at residues 19–22 (YTRF). At Ser-23 the chain carries Phosphoserine. Cys-70 carries S-palmitoyl cysteine lipidation. Residues 71 to 91 (FLVIAAVLLLLIGFLIGYLSY) traverse the membrane as a helical; Signal-anchor for type II membrane protein segment. At 92–776 (RGRIELAARC…GDIWETDNEF (685 aa)) the chain is on the extracellular side. Residues 230–322 (SESGSVSGKP…GTGDPYTPGF (93 aa)) enclose the PA domain. Residues Asn-261, Asn-326, and Asn-391 are each glycosylated (N-linked (GlcNAc...) asparagine). Residues 586-776 (KGDTLENLRK…GDIWETDNEF (191 aa)) form a ligand-binding region. Residues 662 to 664 (RGD) carry the Cell attachment site motif. An N-linked (GlcNAc...) asparagine glycan is attached at Asn-738.

It belongs to the peptidase M28 family. M28B subfamily. In terms of assembly, homodimer; disulfide-linked. Binds one transferrin molecule per subunit. In terms of processing, stearoylated. Stearoylation does not affect iron uptake. N- and O-glycosylated, phosphorylated and palmitoylated.

The protein resides in the cell membrane. It localises to the melanosome. Functionally, cellular uptake of iron occurs via receptor-mediated endocytosis of ligand-occupied transferrin receptor into specialized endosomes. Endosomal acidification leads to iron release. The apotransferrin-receptor complex is then recycled to the cell surface with a return to neutral pH and the concomitant loss of affinity of apotransferrin for its receptor. Transferrin receptor is necessary for development of erythrocytes and the nervous system. Acts as a lipid sensor that regulates mitochondrial fusion by regulating activation of the JNK pathway. When dietary levels of stearate (C18:0) are low, promotes activation of the JNK pathway, resulting in HUWE1-mediated ubiquitination and subsequent degradation of the mitofusin MFN2 and inhibition of mitochondrial fusion. When dietary levels of stearate (C18:0) are high, TFRC stearoylation inhibits activation of the JNK pathway and thus degradation of the mitofusin MFN2. Mediates uptake of NICOL1 into fibroblasts where it may regulate extracellular matrix production. The chain is Transferrin receptor protein 1 (TFRC) from Gallus gallus (Chicken).